Consider the following 211-residue polypeptide: Endonuclease V (211 aa).

Residues Asp-37 and Asp-102 each contribute to the Mg(2+) site.

Belongs to the endonuclease V family. Mg(2+) is required as a cofactor.

It is found in the cytoplasm. It carries out the reaction Endonucleolytic cleavage at apurinic or apyrimidinic sites to products with a 5'-phosphate.. In terms of biological role, DNA repair enzyme involved in the repair of deaminated bases. Selectively cleaves double-stranded DNA at the second phosphodiester bond 3' to a deoxyinosine leaving behind the intact lesion on the nicked DNA. This Ignicoccus hospitalis (strain KIN4/I / DSM 18386 / JCM 14125) protein is Endonuclease V.